The primary structure comprises 309 residues: Replication factor C subunit 4 (309 aa).

Residues V5, V17, 42-50 (GPPGTGKTT), N134, and R192 each bind ATP.

The protein belongs to the activator 1 small subunits family. Component of the replication factor C (RFC) complex.

It is found in the nucleus. Functionally, component of ATP-dependent clamp loader (RFC and RFC-like) complexes for DNA clamps. During a clamp loading circle, the RFC:clamp complex binds to DNA and the recognition of the double-stranded/single-stranded junction stimulates ATP hydrolysis by RFC. The complex presumably provides bipartite ATP sites in which one subunit supplies a catalytic site for hydrolysis of ATP bound to the neighboring subunit. Dissociation of RFC from the clamp leaves the clamp encircling DNA. Component of the replication factor C (RFC or activator 1) complex which acts during elongation of primed DNA templates by DNA polymerase delta and epsilon. RFC has an essential but redundant activity in sister chromatid cohesion establishment. The sequence is that of Replication factor C subunit 4 (RFC4) from Encephalitozoon cuniculi (strain GB-M1) (Microsporidian parasite).